Consider the following 614-residue polypeptide: RNA polymerase sigma factor RpoD (614 aa).

The interval 178–222 (THIGSDLSQSERDKDDSKDDSKDDDEDEEEEGPKGPDPEESKERF) is disordered. Residues 186-198 (QSERDKDDSKDDS) are compositionally biased toward basic and acidic residues. Over residues 199–208 (KDDDEDEEEE) the composition is skewed to acidic residues. Residues 209 to 222 (GPKGPDPEESKERF) are compositionally biased toward basic and acidic residues. Residues 380-450 (MVEANLRLVI…TRSIADQART (71 aa)) are sigma-70 factor domain-2. An Interaction with polymerase core subunit RpoC motif is present at residues 404–407 (DLIQ). A sigma-70 factor domain-3 region spans residues 459–535 (ETINKLNRIS…DTTLELPLDS (77 aa)). Residues 548–601 (VLAGLTAREAKVLRMRFGIDMNTDHTLEEVGKQFDVTRERIRQIEAKALRKLRH) form a sigma-70 factor domain-4 region. A DNA-binding region (H-T-H motif) is located at residues 574–593 (LEEVGKQFDVTRERIRQIEA).

This sequence belongs to the sigma-70 factor family. RpoD/SigA subfamily. Interacts transiently with the RNA polymerase catalytic core.

The protein resides in the cytoplasm. In terms of biological role, sigma factors are initiation factors that promote the attachment of RNA polymerase to specific initiation sites and are then released. This sigma factor is the primary sigma factor during exponential growth. The protein is RNA polymerase sigma factor RpoD of Shewanella violacea (strain JCM 10179 / CIP 106290 / LMG 19151 / DSS12).